The chain runs to 437 residues: Photosystem II stability/assembly factor HCF136, chloroplastic (437 aa).

Belongs to the Ycf48 family.

Its subcellular location is the plastid. It localises to the chloroplast thylakoid membrane. Functionally, essential for photosystem II (PSII) biogenesis; required for assembly of an early intermediate in PSII assembly that includes D2 (psbD) and cytochrome b559. The protein is Photosystem II stability/assembly factor HCF136, chloroplastic of Cyanidioschyzon merolae (strain NIES-3377 / 10D) (Unicellular red alga).